Consider the following 178-residue polypeptide: Large ribosomal subunit protein eL20x (178 aa).

This sequence belongs to the eukaryotic ribosomal protein eL20 family.

The chain is Large ribosomal subunit protein eL20x (RPL18AC) from Arabidopsis thaliana (Mouse-ear cress).